The sequence spans 558 residues: Scarecrow-like protein 6 (558 aa).

The disordered stretch occupies residues 19 to 90; that stretch reads FSSSFPQPPS…GGDATTDEQC (72 aa). The span at 54-75 shows a compositional bias: low complexity; sequence SVLDSLISPTSSSTVSSSHGGN. Residues 196–554 enclose the GRAS domain; that stretch reads KRLNPGPVGI…TELVGVSAWR (359 aa). The segment at 203–257 is leucine repeat I (LRI); sequence VGITEQLVKAAEVIESDTCLAQGILARLNQQLSSPVGKPLERAAFYFKEALNNLL. Positions 276 to 340 are VHIID; it reads YKSFSEISPV…DNAAPLSLKI (65 aa). A VHIID motif is present at residues 307-311; that stretch reads LHIID. The leucine repeat II (LRII) stretch occupies residues 356-388; sequence FTQDNLKHFASEINISLDIQVLSLDLLGSISWP. Residues 396–479 form a PFYRE region; the sequence is VAVNISAASF…RFLIQPEIEK (84 aa). The interval 482–554 is SAW; that stretch reads LDRSRPIERP…TELVGVSAWR (73 aa).

The protein belongs to the GRAS family. In terms of assembly, interacts with Meloidogyne incognita 16D10. Expressed in seedlings, roots, leaves, flowers and siliques.

It localises to the nucleus. Functionally, probable transcription factor involved in plant development. In Arabidopsis thaliana (Mouse-ear cress), this protein is Scarecrow-like protein 6 (SCL6).